A 638-amino-acid polypeptide reads, in one-letter code: Chaperone protein DnaK (638 aa).

T198 bears the Phosphothreonine; by autocatalysis mark. The span at 603–618 (QQAQAQQAQGADADAQ) shows a compositional bias: low complexity. Residues 603–638 (QQAQAQQAQGADADAQQSKEDDVVDAEFEEVKDDKK) are disordered. The segment covering 624–638 (DVVDAEFEEVKDDKK) has biased composition (acidic residues).

The protein belongs to the heat shock protein 70 family.

In terms of biological role, acts as a chaperone. The sequence is that of Chaperone protein DnaK from Vibrio campbellii (strain ATCC BAA-1116).